A 67-amino-acid chain; its full sequence is Probable Sec-independent protein translocase protein TatE (67 aa).

Residues 1–21 form a helical membrane-spanning segment; it reads MEGISIAKLLIIGALIVLLFG. Positions 44 to 67 are disordered; it reads KDEDTSAARTTAEETPAERVSHKD.

This sequence belongs to the TatA/E family. TatE subfamily.

The protein localises to the cell inner membrane. Part of the twin-arginine translocation (Tat) system that transports large folded proteins containing a characteristic twin-arginine motif in their signal peptide across membranes. TatE shares overlapping functions with TatA. The chain is Probable Sec-independent protein translocase protein TatE from Pantoea ananatis (strain LMG 20103).